The following is an 84-amino-acid chain: MAQTQSPLQWLATTVIRGYQILISPLLGPRCRFNPTCSYYAIEAIKTHGTVKGSWFAMKRILKCHPLHPGGSDPVPPKNDRCNK.

The protein belongs to the UPF0161 family.

It is found in the cell inner membrane. Functionally, could be involved in insertion of integral membrane proteins into the membrane. The polypeptide is Putative membrane protein insertion efficiency factor (Shewanella frigidimarina (strain NCIMB 400)).